The primary structure comprises 448 residues: Phosphoglucosamine mutase (448 aa).

Residue Ser-102 is the Phosphoserine intermediate of the active site. Mg(2+)-binding residues include Ser-102, Asp-242, Asp-244, and Asp-246. Ser-102 carries the phosphoserine modification.

The protein belongs to the phosphohexose mutase family. Mg(2+) serves as cofactor. In terms of processing, activated by phosphorylation.

It catalyses the reaction alpha-D-glucosamine 1-phosphate = D-glucosamine 6-phosphate. Functionally, catalyzes the conversion of glucosamine-6-phosphate to glucosamine-1-phosphate. The chain is Phosphoglucosamine mutase from Brevibacillus brevis (strain 47 / JCM 6285 / NBRC 100599).